The sequence spans 876 residues: ATPase WRNIP1 (876 aa).

Composition is skewed to low complexity over residues 56 to 85 and 104 to 175; these read NKSN…TPTK and NNNN…INNN. Positions 56 to 175 are disordered; the sequence is NKSNGNNSIN…NNNNNNINNN (120 aa). 240-246 is an ATP binding site; the sequence is PGCGKTT. Disordered regions lie at residues 621 to 647, 714 to 737, and 833 to 876; these read KDRQ…PQQQ, INNK…LNPT, and ETKA…SLDF. Low complexity-rich tracts occupy residues 626 to 647 and 714 to 731; these read SQDQ…PQQQ and INNK…VNNS. Residues 835-849 show a composition bias toward polar residues; sequence KAISSTDTKESVSIN. A compositionally biased stretch (basic and acidic residues) spans 850–863; the sequence is DSDKDLTTTHKNEQ.

It belongs to the AAA ATPase family. RarA/MGS1/WRNIP1 subfamily.

The protein localises to the nucleus. It carries out the reaction ATP + H2O = ADP + phosphate + H(+). Functions as a modulator for initiation or reinitiation events during DNA polymerase delta-mediated DNA synthesis. Has an intrinsic ATPase activity that functions as a sensor of DNA damage or of arrested replication forks and regulates the extent of DNA synthesis. The protein is ATPase WRNIP1 of Dictyostelium discoideum (Social amoeba).